We begin with the raw amino-acid sequence, 737 residues long: ATP-dependent RNA helicase SUV3, mitochondrial (737 aa).

The transit peptide at 1 to 25 (MTLVKYSTIAFPLRSFRLFIFVKKA) directs the protein to the mitochondrion. Residues 226–365 (EARKIRRHII…KSVLPLVKSI (140 aa)) form the Helicase ATP-binding domain. Residue 239-246 (GPTNSGKT) participates in ATP binding. Positions 390–546 (PVKDGIKGLR…YLKTAVTWPT (157 aa)) constitute a Helicase C-terminal domain.

This sequence belongs to the helicase family.

The protein localises to the mitochondrion. It carries out the reaction ATP + H2O = ADP + phosphate + H(+). In terms of biological role, probable ATP-dependent RNA helicase involved in a variety of mitochondrial post-transcriptional processes and in translation. It is a key control element in nuclear-mitochondrial interactions. In Saccharomyces paradoxus (Yeast), this protein is ATP-dependent RNA helicase SUV3, mitochondrial (SUV3).